Reading from the N-terminus, the 78-residue chain is Small ribosomal subunit protein uS15 (78 aa).

This sequence belongs to the universal ribosomal protein uS15 family. In terms of assembly, part of the 30S ribosomal subunit. Forms a bridge to the 50S subunit in the 70S ribosome, contacting the 23S rRNA.

Its function is as follows. One of the primary rRNA binding proteins, it binds directly to 16S rRNA where it helps nucleate assembly of the platform of the 30S subunit by binding and bridging several RNA helices of the 16S rRNA. In terms of biological role, forms an intersubunit bridge (bridge B4) with the 23S rRNA of the 50S subunit in the ribosome. This chain is Small ribosomal subunit protein uS15, found in Karelsulcia muelleri (strain GWSS) (Sulcia muelleri).